A 260-amino-acid chain; its full sequence is MNVFDVETYLQRIGCGGETGVDLETLAKLQKSHLMAIPYSSLAYELRDAVNVVDLDEDDVFVTSIAEGQGGACYHLNRLFHRLLTELGYDVTPLAGSTAEGRETFGTDVEHMFNLVTLDGADWLVDVGYPGPTYVEPLAVSPAVQTQYGSQFRLVEQETGYALQRRGAVTRWSVVYTFTTQPRQWSDWKELEDNFRALVGDTTRTDTQETLCGRAFANGQVFLRQRRYLTVENGREQVRTITDDDEFRALVSRVLSGDHG.

C73 serves as the catalytic Acyl-thioester intermediate. Residues H111 and D126 contribute to the active site.

This sequence belongs to the arylamine N-acetyltransferase family.

Its pathway is antibiotic biosynthesis; rifamycin B biosynthesis. Its function is as follows. Catalyzes the release of the completed linear polyketide from the rif PKS by forming an intramolecular amide bond, in this way terminating polyketide assembly and forming the macrocyclic compound proansamycin X, an intermediate in the rifamycin B biosynthesis. This is Proansamycin X synthase (rifF) from Amycolatopsis mediterranei (strain S699) (Nocardia mediterranei).